Reading from the N-terminus, the 485-residue chain is Regulatory protein ViaA (485 aa).

This sequence belongs to the ViaA family. Homodimer. Interacts with RavA.

It is found in the cytoplasm. Component of the RavA-ViaA chaperone complex, which may act on the membrane to optimize the function of some of the respiratory chains. ViaA stimulates the ATPase activity of RavA. This Proteus mirabilis (strain HI4320) protein is Regulatory protein ViaA.